The chain runs to 341 residues: S-adenosylmethionine:tRNA ribosyltransferase-isomerase (341 aa).

Belongs to the QueA family. Monomer.

Its subcellular location is the cytoplasm. The enzyme catalyses 7-aminomethyl-7-carbaguanosine(34) in tRNA + S-adenosyl-L-methionine = epoxyqueuosine(34) in tRNA + adenine + L-methionine + 2 H(+). It functions in the pathway tRNA modification; tRNA-queuosine biosynthesis. Transfers and isomerizes the ribose moiety from AdoMet to the 7-aminomethyl group of 7-deazaguanine (preQ1-tRNA) to give epoxyqueuosine (oQ-tRNA). In Clostridium botulinum (strain Kyoto / Type A2), this protein is S-adenosylmethionine:tRNA ribosyltransferase-isomerase.